A 195-amino-acid chain; its full sequence is Penicillin-binding protein activator LpoB (195 aa).

Positions 1-16 are cleaved as a signal peptide; it reads MKKYLFVALAALVLTG. A lipid anchor (N-palmitoyl cysteine) is attached at C17. Residue C17 is the site of S-diacylglycerol cysteine attachment. The disordered stretch occupies residues 19 to 55; the sequence is SRPPEPEQPQPPVTVEPVTPPVVEEPQPPVTEPVPQP. Composition is skewed to pro residues over residues 24-38 and 44-55; these read PEQPQPPVTVEPVTP and PQPPVTEPVPQP.

Belongs to the LpoB family. As to quaternary structure, interacts with PBP1b.

It localises to the cell outer membrane. Functionally, regulator of peptidoglycan synthesis that is essential for the function of penicillin-binding protein 1B (PBP1b). The polypeptide is Penicillin-binding protein activator LpoB (Serratia proteamaculans (strain 568)).